A 351-amino-acid chain; its full sequence is Protein FAM118B (351 aa).

Residue Ala-2 is modified to N-acetylalanine. Ser-9 is modified (phosphoserine).

This sequence belongs to the FAM118 family.

It is found in the nucleus. Its subcellular location is the cajal body. In terms of biological role, may play a role in Cajal bodies formation. The polypeptide is Protein FAM118B (FAM118B) (Homo sapiens (Human)).